Here is a 271-residue protein sequence, read N- to C-terminus: N-acetylaspartate synthetase (271 aa).

The tract at residues 1–38 is disordered; the sequence is MTYRGTRKSPCCSPPPRCGPPLPSGPAGSALGPPSSGA. Positions 12–24 are enriched in pro residues; sequence CSPPPRCGPPLPS. Residues 25-37 are compositionally biased toward low complexity; sequence GPAGSALGPPSSG. The helical transmembrane segment at 89–109 threads the bilayer; that stretch reads VYAVIIIMCFVVTKSLLVTCC. The region spanning 115–258 is the N-acetyltransferase domain; it reads LGMRYYYSRK…HSLLERLFFQ (144 aa).

It belongs to the NAT8 family.

The protein resides in the cytoplasm. It is found in the microsome membrane. Its subcellular location is the mitochondrion membrane. The protein localises to the endoplasmic reticulum membrane. It carries out the reaction L-aspartate + acetyl-CoA = N-acetyl-L-aspartate + CoA + H(+). Catalyzes the synthesis of N-acetylaspartate acid (NAA) from L-aspartate and acetyl-CoA. In Xenopus tropicalis (Western clawed frog), this protein is N-acetylaspartate synthetase (nat8l).